Here is a 394-residue protein sequence, read N- to C-terminus: MAQNGYLVPADPSAVVTVKKKTPQASWALIDATGQSEPLDVDKYEIMHRVQIHARDLRILDPNLSYPSTILGRERAIVLNLEHIKAIITSEEVLLRDPSDENVIPVVEELRRRLPVGNASHNGGQGDGKEIAGAQNDGDTGDEDESPFEFRALEVALEAICSFLAARTAELETAAYPALDELTSKISSRNLDRVRKLKSAMTRLTARVQKVRDELEQLLDDDDDMADLYLSRKLSSASSPISSIGEPNWYTTSPTIGSKISRASRASLATVHGDENDVEELEMLLEAYFMQIDSTLNRLTTLREYIDDTEDYINIQLDNHRNQLIQLELVLSSGTVCLSMYSLVAGIFGMNIPYTWNDGHGYMFKYVVGLTGTLCVVVFVIIMSYARYKGLVGS.

The disordered stretch occupies residues 115–145; the sequence is PVGNASHNGGQGDGKEIAGAQNDGDTGDEDE. Transmembrane regions (helical) follow at residues 329–349 and 366–386; these read LVLS…GIFG and YVVG…MSYA. A Required for magnesium transport activity motif is present at residues 349 to 351; it reads GMN.

It belongs to the CorA metal ion transporter (MIT) (TC 1.A.35.5) family. In terms of tissue distribution, expressed in the whole plant but preferentially in the mature anthers.

Its subcellular location is the membrane. In terms of biological role, low-affinity magnesium transporter that mediates the influx of magnesium. Plays a crucial role in male gametophyte development and male fertility. This is Magnesium transporter MRS2-2 (MRS2-2) from Arabidopsis thaliana (Mouse-ear cress).